The primary structure comprises 349 residues: Isopentenyl-diphosphate delta-isomerase (349 aa).

Residue 6–7 (RK) participates in substrate binding. FMN contacts are provided by residues 62–64 (AMT), serine 93, and asparagine 122. Glutamine 152 lines the substrate pocket. Position 153 (glutamate 153) interacts with Mg(2+). Residues lysine 184, threonine 214, 258–259 (GG), and 280–281 (AG) contribute to the FMN site.

It belongs to the IPP isomerase type 2 family. As to quaternary structure, homooctamer. Dimer of tetramers. It depends on FMN as a cofactor. Requires NADPH as cofactor. Mg(2+) serves as cofactor.

Its subcellular location is the cytoplasm. The catalysed reaction is isopentenyl diphosphate = dimethylallyl diphosphate. Its function is as follows. Involved in the biosynthesis of isoprenoids. Catalyzes the 1,3-allylic rearrangement of the homoallylic substrate isopentenyl (IPP) to its allylic isomer, dimethylallyl diphosphate (DMAPP). The sequence is that of Isopentenyl-diphosphate delta-isomerase from Bacillus cereus (strain ATCC 14579 / DSM 31 / CCUG 7414 / JCM 2152 / NBRC 15305 / NCIMB 9373 / NCTC 2599 / NRRL B-3711).